The primary structure comprises 226 residues: Lysoplasmalogenase TMEM86B (226 aa).

Topologically, residues 1-23 (MDAGKAGQTLKTHCSAQRPDVCR) are cytoplasmic. Residues 24–40 (WLSPFILSCCVYFCLWI) form a helical membrane-spanning segment. Over 41–46 (PEDQLS) the chain is Extracellular. A helical transmembrane segment spans residues 47-67 (WFAALVKCLPVLCLAGFLWVM). The Cytoplasmic segment spans residues 68-75 (SPSGGYTQ). The chain crosses the membrane as a helical span at residues 76 to 93 (LLQGALVCSAVGDACLIW). Topologically, residues 94–100 (PAAFVPG) are extracellular. The helical transmembrane segment at 101 to 117 (MAAFATAHLLYVWAFGF) threads the bilayer. Topologically, residues 118–123 (SPLQPG) are cytoplasmic. Residues 124 to 140 (LLLLIILAPGPYLSLVL) form a helical membrane-spanning segment. The Extracellular portion of the chain corresponds to 141–146 (QHLEPD). Residues 147 to 163 (MVLPVAAYGLILMAMLW) form a helical membrane-spanning segment. Residues 164–171 (RGLAQGGS) are Cytoplasmic-facing. The chain crosses the membrane as a helical span at residues 172–188 (AGWGALLFTLSDGVLAW). Topologically, residues 189 to 199 (DTFAQPLPHAH) are extracellular. The chain crosses the membrane as a helical span at residues 200–218 (LVIMTTYYAAQLLITLSAL). Over 219–226 (RSPVPKTD) the chain is Cytoplasmic.

The protein belongs to the TMEM86 family. Homodimer.

It is found in the endoplasmic reticulum membrane. It localises to the cytoplasm. It carries out the reaction a 1-O-(1Z-alkenyl)-sn-glycero-3-phosphocholine + H2O = a 2,3-saturated aldehyde + sn-glycerol 3-phosphocholine. The enzyme catalyses a 1-O-(1Z-alkenyl)-sn-glycero-3-phosphoethanolamine + H2O = a 2,3-saturated aldehyde + sn-glycero-3-phosphoethanolamine. Competitively inhibited by lysophosphatidic acid. Catalyzes the hydrolysis of the vinyl ether bond of choline or ethanolamine lysoplasmalogens, forming fatty aldehyde and glycerophosphocholine or glycerophosphoethanolamine, respectively and is specific for the sn-2-deacylated (lyso) form of plasmalogen. This chain is Lysoplasmalogenase TMEM86B (TMEM86B), found in Homo sapiens (Human).